Consider the following 427-residue polypeptide: MEANMSFENDYYSPIQLFAEIEAYANTMDKSPDLDILRTIEEFDETLLSEIEVRTQSIPSPLVAPSVTKMSLPSPSPAPPNSLYTRLLHELDFVEGPSILARLEKINVDLFSCFPHNKHLYEHAKILSVSPSEVLEELSKNTWTYTALNLNEHGEMALPMPPTTKADLPSYVDDIQNFYLGELEAREKSYATMFYGYCRALAEYIRQSAIKDLRDARVEDKNIGACSKARQYIAERYYREAARFAKLLYVHLYLSTTRDVSQRLEASQMGRQNIFVYLKCEWLQERHFHCLFQPVIFNHGVVIVEGRVLTAPELRAQNYIRSEFGLPLIRCKLVEEPDMPLISPPPFSGDAPRASVYLLQCIRSKLEVYSLSHPPNPQLHVHKEHVHVQKLESPPNYGTTVEALLMDSSDRNSISPGDPVATTISTL.

This sequence belongs to the herpesviridae tegument protein VP16 protein family.

Its subcellular location is the virion tegument. The protein localises to the host nucleus. Its function is as follows. Transcriptional activator of immediate-early (IE) gene products (alpha genes). Acts as a key activator of lytic infection by initiating the lytic program through the assembly of the transcriptional regulatory VP16-induced complex composed of VP16 and two cellular factors, HCFC1 and POU2F1. VP16-induced complex represents a regulatory switch: when it is on, it promotes IE-gene expression and thus lytic infection, and when it is off, it limits IE-gene transcription favoring latent infection. In terms of biological role, may play a role in the aggregation of tegument proteins around nucleocapsids during virus morphogenesis. This is Tegument protein VP16 homolog (MDV061) from Gallus gallus (Chicken).